Here is a 218-residue protein sequence, read N- to C-terminus: Putative glutamine transport system permease protein GlnP (218 aa).

The region spanning 19–208 is the ABC transmembrane type-1 domain; that stretch reads TLVTLKYSVI…ILVMLISFIA (190 aa). The next 4 helical transmembrane spans lie at 25-45, 57-79, 86-108, and 187-207; these read YSVIAVIFGLVIGMLLAICKV, FYTSIFRGTPLLIQLSIIYFASP, FSVFMAGAIAFSLNSGAYVSEVI, and FFPMLIAACCYYILVMLISFI.

This sequence belongs to the binding-protein-dependent transport system permease family. HisMQ subfamily.

The protein localises to the cell inner membrane. In terms of biological role, part of the binding-protein-dependent transport system for glutamine; probably responsible for the translocation of the substrate across the membrane. This Rickettsia conorii (strain ATCC VR-613 / Malish 7) protein is Putative glutamine transport system permease protein GlnP (glnP).